The chain runs to 263 residues: MRSFLYLIVVIFLFSSSVNACDRCLHRSKASYFSSASALSSGACAYGPMATSFFAGHIAAAIPSIYKDGAGCGACFQVRCKNPKLCNSKGTIVMVTDLNTSNQTDLVLSSRAFRAMAKPVVGVDKYLLKQGIVDVEYQRVPCNYGKRNLNVRVEEASKKPNYLAIKLLYQGGQTEVVGIDIAPVGSSQWSYMSRSHGAVWATDKVPTGALQFKFTVTGGYDGKTVWSKRVLPANWNSGRIYDAGVQITDIAQEGCDTCGHIWN.

Residues 1 to 20 form the signal peptide; that stretch reads MRSFLYLIVVIFLFSSSVNA. One can recognise an Expansin-like EG45 domain in the interval 41-147; sequence SGACAYGPMA…QRVPCNYGKR (107 aa). N99 and N102 each carry an N-linked (GlcNAc...) asparagine glycan. In terms of domain architecture, Expansin-like CBD spans 161–243; the sequence is NYLAIKLLYQ…NWNSGRIYDA (83 aa).

It belongs to the expansin family. Expansin-like A subfamily.

The protein resides in the secreted. The polypeptide is Expansin-like A3 (EXLA3) (Arabidopsis thaliana (Mouse-ear cress)).